A 792-amino-acid chain; its full sequence is MDSKESLAPPGRDEVPSSLLGRGRGSVMDLYKTLRGGATVKVSASSPSVAAASQADSKQQRILLDFSKGSASNAQQQQQQQQQQQQQQQQQPQPDLSKAVSLSMGLYMGETETKVMGNDLGYPQQGQLGLSSGETDFRLLEESIANLNRSTSRPENPKSSTPAAGCATPTEKEFPQTHSDPSSEQQNRKSQPGTNGGSVKLYTTDQSTFDILQDLEFSAGSPGKETNESPWRSDLLIDENLLSPLAGEDDPFLLEGDVNEDCKPLILPDTKPKIQDTGDTILSSPSSVALPQVKTEKDDFIELCTPGVIKQEKLGPVYCQASFSGTNIIGNKMSAISVHGVSTSGGQMYHYDMNTASLSQQQDQKPVFNVIPPIPVGSENWNRCQGSGEDNLTSLGAMNFAGRSVFSNGYSSPGMRPDVSSPPSSSSTATGPPPKLCLVCSDEASGCHYGVLTCGSCKVFFKRAVEGQHNYLCAGRNDCIIDKIRRKNCPACRYRKCLQAGMNLEARKTKKKIKGIQQATAGVSQDTSENANKTIVPAALPQLTPTLVSLLEVIEPEVLYAGYDSSVPDSAWRIMTTLNMLGGRQVIAAVKWAKAIPGFRNLHLDDQMTLLQYSWMFLMAFALGWRSYRQASGNLLCFAPDLIINEQRMTLPCMYDQCKHMLFISTELQRLQVSYEEYLCMKTLLLLSSVPKEGLKSQELFDEIRMTYIKELGKAIVKREGNSSQNWQRFYQLTKLLDSMHDVVENLLSYCFQTFLDKSMSIEFPEMLAEIITNQIPKYSNGNIKKLLFHQK.

A compositionally biased stretch (basic and acidic residues) spans 1–15 (MDSKESLAPPGRDEV). Positions 1-25 (MDSKESLAPPGRDEVPSSLLGRGRG) are disordered. Residues 1-436 (MDSKESLAPP…STATGPPPKL (436 aa)) are modulating. Position 24 is an omega-N-methylarginine (Arg-24). Residue Ser-46 is modified to Phosphoserine. Residues 67-98 (SKGSASNAQQQQQQQQQQQQQQQQQPQPDLSK) are disordered. Low complexity predominate over residues 75 to 94 (QQQQQQQQQQQQQQQQQPQP). A phosphoserine mark is found at Ser-131, Ser-152, and Ser-159. Over residues 148–162 (NRSTSRPENPKSSTP) the composition is skewed to polar residues. The segment at 148 to 201 (NRSTSRPENPKSSTPAAGCATPTEKEFPQTHSDPSSEQQNRKSQPGTNGGSVKL) is disordered. Thr-168 carries the post-translational modification Phosphothreonine. Residues 176-193 (QTHSDPSSEQQNRKSQPG) are compositionally biased toward polar residues. A phosphoserine mark is found at Ser-221, Ser-229, Ser-243, and Ser-284. Residues Lys-294 and Lys-310 each participate in a glycyl lysine isopeptide (Lys-Gly) (interchain with G-Cter in SUMO); alternate cross-link. Residues Lys-294 and Lys-310 each participate in a glycyl lysine isopeptide (Lys-Gly) (interchain with G-Cter in SUMO2); alternate cross-link. A phosphoserine mark is found at Ser-324 and Ser-421. Positions 434–509 (PKLCLVCSDE…AGMNLEARKT (76 aa)) form a DNA-binding region, nuclear receptor. Lys-435 participates in a covalent cross-link: Glycyl lysine isopeptide (Lys-Gly) (interchain with G-Cter in ubiquitin). NR C4-type zinc fingers lie at residues 437–457 (CLVC…CGSC) and 473–497 (CAGR…YRKC). 4 positions are modified to N6-acetyllysine: Lys-496, Lys-508, Lys-510, and Lys-511. The tract at residues 501–792 (GMNLEARKTK…NIKKLLFHQK (292 aa)) is interaction with CLOCK. The interval 503 to 538 (NLEARKTKKKIKGIQQATAGVSQDTSENANKTIVPA) is hinge. Residues 539–773 (ALPQLTPTLV…FPEMLAEIIT (235 aa)) enclose the NR LBD domain. Residues 547–712 (LVSLLEVIEP…EIRMTYIKEL (166 aa)) form an interaction with CRY1 region. A Glycyl lysine isopeptide (Lys-Gly) (interchain with G-Cter in SUMO) cross-link involves residue Lys-718.

Belongs to the nuclear hormone receptor family. NR3 subfamily. Heteromultimeric cytoplasmic complex with HSP90AA1, HSPA1A/HSPA1B, and FKBP5 or another immunophilin such as PPID, STIP1, or the immunophilin homolog PPP5C. Upon ligand binding FKBP5 dissociates from the complex and FKBP4 takes its place, thereby linking the complex to dynein and mediating transport to the nucleus, where the complex dissociates. Probably forms a complex composed of chaperones HSP90 and HSP70, co-chaperones CDC37, PPP5C, TSC1 and client protein TSC2, CDK4, AKT, RAF1 and NR3C1; this complex does not contain co-chaperones STIP1/HOP and PTGES3/p23. Directly interacts with UNC45A. Binds to DNA as a homodimer, and as heterodimer with NR3C2 or the retinoid X receptor. Binds STAT5A and STAT5B homodimers and heterodimers. Interacts with NRIP1, POU2F1, POU2F2 and TRIM28. Interacts with several coactivator complexes, including the SMARCA4 complex, CREBBP/EP300, TADA2L (Ada complex) and p160 coactivators such as NCOA2 and NCOA6. Interaction with BAG1 inhibits transactivation. Interacts with HEXIM1 and TGFB1I1. Interacts with NCOA1. Interacts with NCOA3, SMARCA4, SMARCC1, SMARCD1, and SMARCE1. Interacts with CLOCK, CRY1 and CRY2 in a ligand-dependent fashion. Interacts with CIART. Interacts with RWDD3. Interacts with UBE2I/UBC9 and this interaction is enhanced in the presence of RWDD3. Interacts with GRIP1. Interacts with NR4A3 (via nuclear receptor DNA-binding domain), represses transcription activity of NR4A3 on the POMC promoter Nur response element (NurRE). Directly interacts with PNRC2 to attract and form a complex with UPF1 and DCP1A; the interaction leads to rapid mRNA degradation. Interacts with GSK3B. Interacts with FNIP1 and FNIP2. Interacts (via C-terminus) with HNRNPU (via C-terminus). Interacts with MCM3AP. Interacts (via domain NR LBD) with HSP90AA1 and HSP90AB1. In the absence of hormonal ligand, interacts with TACC1. Interacts (via NR LBD domain) with ZNF764 (via KRAB domain); the interaction regulates transcription factor activity of NR3C1 by directing its actions toward certain biologic pathways. Post-translationally, acetylation by CLOCK reduces its binding to glucocorticoid response elements and its transcriptional activity. In terms of processing, increased proteasome-mediated degradation in response to glucocorticoids. Phosphorylated in the absence of hormone; becomes hyperphosphorylated in the presence of glucocorticoids. Phosphorylated in the absence of hormone; becomes hyperphosphorylated in the presence of glucocorticoid. The Ser-221, Ser-243 and Ser-421-phosphorylated forms are mainly cytoplasmic, and the Ser-229-phosphorylated form is nuclear. Phosphorylation at Ser-229 increases transcriptional activity. Phosphorylation at Ser-221, Ser-243 and Ser-421 decreases signaling capacity. Phosphorylation at Ser-421 may protect from glucocorticoid-induced apoptosis. Phosphorylation at Ser-221 and Ser-229 is not required in regulation of chromosome segregation. May be dephosphorylated by PPP5C, attenuates NR3C1 action. Post-translationally, sumoylation at Lys-294 and Lys-310 negatively regulates its transcriptional activity. Sumoylation at Lys-718 positively regulates its transcriptional activity in the presence of RWDD3. Sumoylation at Lys-294 and Lys-310 is dispensable whereas sumoylation at Lys-718 is critical for the stimulatory effect of RWDD3 on its transcriptional activity. Heat shock increases sumoylation in a RWDD3-dependent manner. In terms of processing, ubiquitinated. Ubiquitination by UBR5 leads to its degradation: UBR5 specifically recognizes and binds ligand-bound NR3C1 when it is not associated with coactivators (NCOAs). In presence of NCOAs, the UBR5-degron is not accessible, preventing its ubiquitination and degradation. As to expression, expressed in spleen, kidney and liver. Expressed in a circadian manner in the liver. In terms of tissue distribution, expressed at highest level in spleen with lesser amounts in kidney and liver.

The protein resides in the cytoplasm. It is found in the nucleus. The protein localises to the mitochondrion. It localises to the cytoskeleton. Its subcellular location is the spindle. The protein resides in the microtubule organizing center. It is found in the centrosome. The protein localises to the chromosome. It localises to the nucleoplasm. Receptor for glucocorticoids (GC). Has a dual mode of action: as a transcription factor that binds to glucocorticoid response elements (GRE), both for nuclear and mitochondrial DNA, and as a modulator of other transcription factors. Affects inflammatory responses, cellular proliferation and differentiation in target tissues. Involved in chromatin remodeling. Plays a role in rapid mRNA degradation by binding to the 5' UTR of target mRNAs and interacting with PNRC2 in a ligand-dependent manner which recruits the RNA helicase UPF1 and the mRNA-decapping enzyme DCP1A, leading to RNA decay. Could act as a coactivator for STAT5-dependent transcription upon growth hormone (GH) stimulation and could reveal an essential role of hepatic GR in the control of body growth. Functionally, has transcriptional activation and repression activity. Mediates glucocorticoid-induced apoptosis. Promotes accurate chromosome segregation during mitosis. May act as a tumor suppressor. May play a negative role in adipogenesis through the regulation of lipolytic and antilipogenic gene expression. In terms of biological role, acts as a dominant negative inhibitor of isoform 1. Has intrinsic transcriptional activity independent of isoform Alpha when both isoforms are coexpressed. Loses this transcription modulator function on its own. Has no hormone-binding activity. May play a role in controlling glucose metabolism by maintaining insulin sensitivity. Reduces hepatic gluconeogenesis through down-regulation of PEPCK in an isoform Alpha-dependent manner. Directly regulates STAT1 expression in isoform Alpha-independent manner. This is Glucocorticoid receptor (Nr3c1) from Mus musculus (Mouse).